A 1007-amino-acid chain; its full sequence is Lysosomal alpha-mannosidase (1007 aa).

The first 47 residues, 1-47, serve as a signal peptide directing secretion; sequence MGASVLPLGLGAGDCQSSSGRRMSACLPRTALSFLLSLLLATPGARA. Cystine bridges form between Cys-53/Cys-356 and Cys-266/Cys-271. Positions 70 and 72 each coordinate Zn(2+). The N-linked (GlcNAc...) asparagine glycan is linked to Asn-131. Asp-194 contacts Zn(2+). Asp-194 acts as the Nucleophile in catalysis. Asn-308, Asn-343, and Asn-365 each carry an N-linked (GlcNAc...) asparagine glycan. 2 disulfide bridges follow: Cys-410/Cys-470 and Cys-491/Cys-499. His-444 serves as a coordination point for Zn(2+). 6 N-linked (GlcNAc...) asparagine glycosylation sites follow: Asn-495, Asn-540, Asn-639, Asn-686, Asn-760, and Asn-927.

Belongs to the glycosyl hydrolase 38 family. It depends on Zn(2+) as a cofactor.

Its subcellular location is the lysosome. It catalyses the reaction Hydrolysis of terminal, non-reducing alpha-D-mannose residues in alpha-D-mannosides.. Necessary for the catabolism of N-linked carbohydrates released during glycoprotein turnover. This chain is Lysosomal alpha-mannosidase (MAN2B1), found in Cavia porcellus (Guinea pig).